Here is a 148-residue protein sequence, read N- to C-terminus: Large ribosomal subunit protein bL9 (148 aa).

Belongs to the bacterial ribosomal protein bL9 family.

In terms of biological role, binds to the 23S rRNA. The chain is Large ribosomal subunit protein bL9 from Pelotomaculum thermopropionicum (strain DSM 13744 / JCM 10971 / SI).